We begin with the raw amino-acid sequence, 1474 residues long: Alpha-2-macroglobulin (1474 aa).

An N-terminal signal peptide occupies residues 1 to 23 (MGKNKLLHPSLVLLLLVLLPTDA). Cys-48 and Cys-86 are oxidised to a cystine. Residues Asn-55, Asn-70, and Asn-247 are each glycosylated (N-linked (GlcNAc...) asparagine). 2 cysteine pairs are disulfide-bonded: Cys-251–Cys-299 and Cys-269–Cys-287. 2 N-linked (GlcNAc...) asparagine glycosylation sites follow: Asn-396 and Asn-410. 8 disulfide bridges follow: Cys-470–Cys-563, Cys-595–Cys-771, Cys-642–Cys-689, Cys-821–Cys-849, Cys-847–Cys-883, Cys-921–Cys-1321, Cys-1079–Cys-1127, and Cys-1352–Cys-1467. The tract at residues 690–728 (PQLQQYEMHGPEGLRVGFYESDVMGRGHARLVHAEEPPT) is bait region. Residues Gln-693 and Gln-694 each participate in an isoglutamyl lysine isopeptide (Gln-Lys) (interchain with K-? in other proteins) cross-link. 3 inhibitory regions span residues 704-709 (RVGFYE), 719-723 (RLVHA), and 730-735 (TVRKYF). N-linked (GlcNAc...) asparagine glycosylation occurs at Asn-869. Positions 972 to 975 (CGEQ) form a cross-link, isoglutamyl cysteine thioester (Cys-Gln). Asn-991 is a glycosylation site (N-linked (GlcNAc...) asparagine). Asn-1424 is a glycosylation site (N-linked (GlcNAc...) asparagine).

This sequence belongs to the protease inhibitor I39 (alpha-2-macroglobulin) family. As to quaternary structure, homotetramer; disulfide-linked. Plasma.

The protein resides in the secreted. Functionally, is able to inhibit all four classes of proteinases by a unique 'trapping' mechanism. This protein has a peptide stretch, called the 'bait region' which contains specific cleavage sites for different proteinases. When a proteinase cleaves the bait region, a conformational change is induced in the protein which traps the proteinase. The entrapped enzyme remains active against low molecular weight substrates (activity against high molecular weight substrates is greatly reduced). Following cleavage in the bait region a thioester bond is hydrolyzed and mediates the covalent binding of the protein to the proteinase. This Pongo abelii (Sumatran orangutan) protein is Alpha-2-macroglobulin (A2M).